The sequence spans 256 residues: Probable fructose-2,6-bisphosphatase TIGAR A (256 aa).

Residue H11 is the Tele-phosphohistidine intermediate of the active site. The active-site Proton donor/acceptor is the E89. Residues 147 to 170 (HQDKVQDGGTSSADESTEAPAGLA) form a disordered region.

Belongs to the phosphoglycerate mutase family.

The protein resides in the cytoplasm. It is found in the nucleus. Its subcellular location is the mitochondrion. It catalyses the reaction beta-D-fructose 2,6-bisphosphate + H2O = beta-D-fructose 6-phosphate + phosphate. Functionally, fructose-bisphosphatase hydrolyzing fructose-2,6-bisphosphate as well as fructose-1,6-bisphosphate. Acts as a negative regulator of glycolysis by lowering intracellular levels of fructose-2,6-bisphosphate in a p53/TP53-dependent manner, resulting in the pentose phosphate pathway (PPP) activation and NADPH production. Contributes to the generation of reduced glutathione to cause a decrease in intracellular reactive oxygen species (ROS) content, correlating with its ability to protect cells from oxidative or metabolic stress-induced cell death. May play a role in mitophagy inhibition. The protein is Probable fructose-2,6-bisphosphatase TIGAR A of Danio rerio (Zebrafish).